A 124-amino-acid chain; its full sequence is Small ribosomal subunit protein uS12 (124 aa).

Disordered stretches follow at residues 9-32 (RKGR…QRRG) and 105-124 (QGVK…KEKS). Residues 108-118 (KNRKQARSRYG) are compositionally biased toward basic residues.

Belongs to the universal ribosomal protein uS12 family. Part of the 30S ribosomal subunit. Contacts proteins S8 and S17. May interact with IF1 in the 30S initiation complex.

With S4 and S5 plays an important role in translational accuracy. Functionally, interacts with and stabilizes bases of the 16S rRNA that are involved in tRNA selection in the A site and with the mRNA backbone. Located at the interface of the 30S and 50S subunits, it traverses the body of the 30S subunit contacting proteins on the other side and probably holding the rRNA structure together. The combined cluster of proteins S8, S12 and S17 appears to hold together the shoulder and platform of the 30S subunit. This Nocardia farcinica (strain IFM 10152) protein is Small ribosomal subunit protein uS12.